A 119-amino-acid chain; its full sequence is MARVKRGVQARRRHKKILKQAKGYYGARSRVFRVAVQAVTKAGQYAYRDRKVRKRQFRRLWIVRINAAARLNGLSYSRLINGLKKASIDIDRKVLADIAVRDQATFSALAEKAKASLTA.

This sequence belongs to the bacterial ribosomal protein bL20 family.

Its function is as follows. Binds directly to 23S ribosomal RNA and is necessary for the in vitro assembly process of the 50S ribosomal subunit. It is not involved in the protein synthesizing functions of that subunit. The protein is Large ribosomal subunit protein bL20 of Alcanivorax borkumensis (strain ATCC 700651 / DSM 11573 / NCIMB 13689 / SK2).